The primary structure comprises 136 residues: Large ribosomal subunit protein bL21 (136 aa).

This sequence belongs to the bacterial ribosomal protein bL21 family. As to quaternary structure, part of the 50S ribosomal subunit. Contacts protein L20.

Its function is as follows. This protein binds to 23S rRNA in the presence of protein L20. This Trichodesmium erythraeum (strain IMS101) protein is Large ribosomal subunit protein bL21.